A 294-amino-acid polypeptide reads, in one-letter code: tRNA dimethylallyltransferase (294 aa).

9–16 (GATATGKS) lines the ATP pocket. 11 to 16 (TATGKS) contacts substrate. Positions 34 to 37 (DSRQ) are interaction with substrate tRNA.

Belongs to the IPP transferase family. As to quaternary structure, monomer. Mg(2+) serves as cofactor.

The catalysed reaction is adenosine(37) in tRNA + dimethylallyl diphosphate = N(6)-dimethylallyladenosine(37) in tRNA + diphosphate. In terms of biological role, catalyzes the transfer of a dimethylallyl group onto the adenine at position 37 in tRNAs that read codons beginning with uridine, leading to the formation of N6-(dimethylallyl)adenosine (i(6)A). This chain is tRNA dimethylallyltransferase, found in Trichormus variabilis (strain ATCC 29413 / PCC 7937) (Anabaena variabilis).